A 377-amino-acid polypeptide reads, in one-letter code: Nucleoside diphosphate kinase homolog 7 (377 aa).

A DM10 domain is found at 3-91 (HSERFVFIAE…YTARQLGSKK (89 aa)).

The protein belongs to the NDK family. As to quaternary structure, component of sperm flagellar doublet microtubules. Component of the gamma-tubulin ring complex. In terms of tissue distribution, expressed in trachea multiciliated cells.

The protein localises to the cytoplasm. Its subcellular location is the cytoskeleton. The protein resides in the microtubule organizing center. It is found in the centrosome. It localises to the nucleus. The protein localises to the spindle. Its subcellular location is the cilium axoneme. The protein resides in the flagellum axoneme. It is found in the cell projection. It localises to the cilium. Its function is as follows. Possesses an intrinsic kinase activity. Displays 3'-5' exonuclease activity with a preference for single-stranded DNA. Does not seem to have nucleoside diphosphate kinase activity. Functional component of the gamma-tubulin ring complex, implicated in the regulation of the microtubule-nucleating activity of the gamma-tubulin ring complex in centrosomes, in a kinase activity-dependent manner. Part of the dynein-decorated doublet microtubules (DMTs) in cilia axoneme, which is required for motile cilia beating. This is Nucleoside diphosphate kinase homolog 7 (NME7) from Bos taurus (Bovine).